The sequence spans 84 residues: Small ribosomal subunit protein eS27w (84 aa).

The segment at 39-61 (CQGCFNITTVFSHSQTVVVCGNC) adopts a C4-type zinc-finger fold.

The protein belongs to the eukaryotic ribosomal protein eS27 family. The cofactor is Zn(2+).

The polypeptide is Small ribosomal subunit protein eS27w (RPS27D) (Arabidopsis thaliana (Mouse-ear cress)).